The primary structure comprises 541 residues: Chaperonin GroEL (541 aa).

ATP-binding positions include 29-32 (TLGP), 86-90 (DGTTT), Gly413, 478-480 (DAL), and Asp494.

Belongs to the chaperonin (HSP60) family. Forms a cylinder of 14 subunits composed of two heptameric rings stacked back-to-back. Interacts with the co-chaperonin GroES.

It localises to the cytoplasm. It carries out the reaction ATP + H2O + a folded polypeptide = ADP + phosphate + an unfolded polypeptide.. Together with its co-chaperonin GroES, plays an essential role in assisting protein folding. The GroEL-GroES system forms a nano-cage that allows encapsulation of the non-native substrate proteins and provides a physical environment optimized to promote and accelerate protein folding. The protein is Chaperonin GroEL of Alkaliphilus oremlandii (strain OhILAs) (Clostridium oremlandii (strain OhILAs)).